The primary structure comprises 2540 residues: Probable JmjC domain-containing histone demethylation protein 2C (2540 aa).

Residues 278 to 309 (TRAQANSPRPAMNSQAAVPKQNTHQQQQQRSI) are compositionally biased toward polar residues. Residues 278-478 (TRAQANSPRP…TVSDHNSNDL (201 aa)) are disordered. Phosphoserine occurs at positions 317 and 320. The span at 323–342 (DEEKMKEEKYDYISRGENPK) shows a compositional bias: basic and acidic residues. Basic residues predominate over residues 343 to 353 (GKNKHLMNKRR). A compositionally biased stretch (basic and acidic residues) spans 354 to 371 (KPEEDEKKLNMKRLRTDN). Residues serine 373 and serine 376 each carry the phosphoserine modification. The segment covering 373–382 (SDFSESSDSE) has biased composition (low complexity). Composition is skewed to basic and acidic residues over residues 383–403 (NSNK…ELKN), 410–427 (NGEE…EETL), and 438–452 (QEDK…RKSV). Residues 464–478 (SSEQSTVSDHNSNDL) are compositionally biased toward polar residues. Serine 475 and serine 501 each carry phosphoserine. Threonine 505 is modified (phosphothreonine). Residues serine 601, serine 617, serine 638, serine 639, serine 641, serine 652, and serine 943 each carry the phosphoserine modification. The disordered stretch occupies residues 631–656 (VDTHKIKSSPSPEVVKPKITHSPDSV). Disordered regions lie at residues 1242 to 1263 (GKVQ…SQAN) and 1614 to 1692 (NRRK…NSNT). The segment covering 1643 to 1652 (KRQPKPTYKK) has biased composition (basic residues). The segment covering 1653–1669 (KQNDLQKRKGEIEEDLK) has biased composition (basic and acidic residues). The C6-type zinc-finger motif lies at 1846–1871 (CDACEATLFNIHWVCQKCGFVVCLDC). Residues 1971 to 1991 (PESQQQNTPPKSEKNGGSSPE) show a composition bias toward polar residues. Residues 1971-2064 (PESQQQNTPP…LVSQNNEQGS (94 aa)) form a disordered region. Serine 1989 carries the post-translational modification Phosphoserine. Residues 2016 to 2043 (AEQKAREEKKENKELTLENQIKEEREQD) show a composition bias toward basic and acidic residues. Polar residues predominate over residues 2045 to 2064 (SESPNGRTSPLVSQNNEQGS). Positions 2066–2070 (LRDLL) match the LXXLL motif motif. Residues lysine 2132 and lysine 2136 each participate in a glycyl lysine isopeptide (Lys-Gly) (interchain with G-Cter in SUMO2) cross-link. Residues 2274-2498 (MPARYEDLLK…ESFHLTQELR (225 aa)) enclose the JmjC domain. Residues histidine 2336, glutamate 2338, and histidine 2466 each coordinate Fe cation.

The protein belongs to the JHDM2 histone demethylase family. Interacts specifically with the ligand-binding domain of the thyroid receptor (TR). Requires the presence of thyroid hormone for its interaction. The cofactor is Fe(2+).

The protein resides in the nucleus. Functionally, probable histone demethylase that specifically demethylates 'Lys-9' of histone H3, thereby playing a central role in histone code. Demethylation of Lys residue generates formaldehyde and succinate. May be involved in hormone-dependent transcriptional activation, by participating in recruitment to androgen-receptor target genes. This chain is Probable JmjC domain-containing histone demethylation protein 2C (JMJD1C), found in Homo sapiens (Human).